We begin with the raw amino-acid sequence, 396 residues long: Phosphopentomutase (396 aa).

Positions 13, 288, 293, 329, 330, and 341 each coordinate Mn(2+).

The protein belongs to the phosphopentomutase family. The cofactor is Mn(2+).

The protein localises to the cytoplasm. It catalyses the reaction 2-deoxy-alpha-D-ribose 1-phosphate = 2-deoxy-D-ribose 5-phosphate. The enzyme catalyses alpha-D-ribose 1-phosphate = D-ribose 5-phosphate. The protein operates within carbohydrate degradation; 2-deoxy-D-ribose 1-phosphate degradation; D-glyceraldehyde 3-phosphate and acetaldehyde from 2-deoxy-alpha-D-ribose 1-phosphate: step 1/2. Its function is as follows. Isomerase that catalyzes the conversion of deoxy-ribose 1-phosphate (dRib-1-P) and ribose 1-phosphate (Rib-1-P) to deoxy-ribose 5-phosphate (dRib-5-P) and ribose 5-phosphate (Rib-5-P), respectively. The protein is Phosphopentomutase of Clostridium perfringens (strain 13 / Type A).